A 1117-amino-acid chain; its full sequence is Reverse gyrase (1117 aa).

An RG N-terminal-type zinc finger spans residues 3–42 (LATGAKYYHSCINCGGINTDTRNEKGLPCEVCLPFEDGDV). Residues Cys-13, Cys-16, Cys-31, and Cys-34 each contribute to the Zn(2+) site. ATP contacts are provided by residues Gln-84 and 101–108 (APTGVGKT). The Helicase ATP-binding domain maps to 88–284 (AKRLLLSKSF…LFRELLGFEI (197 aa)). A DEAD box motif is present at residues 206 to 209 (DDVD). Residues 551–1117 (KDMKSRMIIV…EELNEILIKN (567 aa)) form a topoisomerase I region. Positions 555-712 (SRMIIVESPT…NVQRIEMHEI (158 aa)) constitute a Toprim domain. Glu-561 lines the Mg(2+) pocket. Residues 631 to 658 (IKRCSSCGAQFTDELPRCPYCNSDKIDD) form an RG C-terminal-type zinc finger. Residues Cys-634, Cys-637, Cys-648, and Cys-651 each coordinate Zn(2+). Asp-681 lines the Mg(2+) pocket. Residues 728–1114 (DVNLVKSQIV…NLYEELNEIL (387 aa)) enclose the Topo IA-type catalytic domain. The active-site O-(5'-phospho-DNA)-tyrosine intermediate is the Tyr-864.

In the N-terminal section; belongs to the DEAD box helicase family. DDVD subfamily. It in the C-terminal section; belongs to the type IA topoisomerase family. As to quaternary structure, monomer. It depends on Zn(2+) as a cofactor. Mg(2+) serves as cofactor.

The protein localises to the cytoplasm. It catalyses the reaction ATP + H2O = ADP + phosphate + H(+). Its function is as follows. Modifies the topological state of DNA by introducing positive supercoils in an ATP-dependent process, increasing the linking number in steps of +1; also positively supercoils with dATP and ATP-gamma-S. With UTP or dTTP relaxes negatively supercoiled DNA, in the absence of any nucleotide partially relaxes negative supercoils. In the absence of nucleotide has a higher affinity for dsDNA with a single-stranded tail than dsDNA or ssDNA. Has an ATPase activity in the absence of DNA. Binds to single-stranded DNA, transiently cleaves and then rejoins the ends, introducing a positive supercoil in the process. The scissile phosphodiester is attacked by the catalytic tyrosine of the enzyme, resulting in the formation of a DNA-(5'-phosphotyrosyl)-enzyme intermediate. Probably involved in rewinding DNA strands in regions of the chromosome that have opened up to allow replication, transcription, DNA repair and/or for DNA protection. The sequence is that of Reverse gyrase from Caldanaerobacter subterraneus subsp. tengcongensis (strain DSM 15242 / JCM 11007 / NBRC 100824 / MB4) (Thermoanaerobacter tengcongensis).